Here is a 151-residue protein sequence, read N- to C-terminus: MPCTPNSHRLLLVTALCLLITSLFAQQKRRPRIDCTRFVFAPACRGVSAKRALDPRAVTLDENVAPSFSDLDDEILRSFLAYNRHKQQEQAAPRPDAPSSLLRLVAQRGLRHRTPHSLHRPVPWSVEQSFLKTGSDGALSWPNSIKSLQED.

A signal peptide spans 1–25 (MPCTPNSHRLLLVTALCLLITSLFA).

It is found in the secreted. This is Abdominal ganglion neuropeptide L11 from Aplysia californica (California sea hare).